A 488-amino-acid chain; its full sequence is MAEKVQYYMEQSVPELEDLLEKNIFNRDEINNIIKTRRVFEEKLARRQVKLNDFLSYIQYEINLETLRAKRHKRLNITGKITISDYAGPRKVLFLFLRATNKFFGDVTLWLDYIHYAQKIKAVNIVGKICVAALQKHPNNAELWVVACDHEFSINANVSAARALMNRALRLNQENPVIWAAYFRLELSYMTKLFARSQILTGNISSKTENITNGVSEDTIGSLSSDTIQLPMVSMEEFLGSSSSEVRKNDSDLNISDDIGNISSKEQQTQKFANVLLQIILNSRKNLSLQNYVGFFVSVLDALFECFDVPVVQYMYQENIIGICNEHFEHFKNESGEIYGVLLHRWCFLEIFIKLRGAYPSNDSGISGKGIFGLKKNDPRITSMVLTDPGFVDDLQAIVEKYQSISSDFQIPFKTKKIFYSFFVKTLHAISSSSAAESSIALALHMLVINAFQSMEKLKILTFDDSLQEIYKEAQIQSGTFMSNATLS.

HAT repeat units follow at residues 31–63 (NNIIKTRRVFEEKLARRQVKLNDFLSYIQYEIN), 87–119 (AGPRKVLFLFLRATNKFFGDVTLWLDYIHYAQK), 121–153 (KAVNIVGKICVAALQKHPNNAELWVVACDHEFS), and 156–188 (ANVSAARALMNRALRLNQENPVIWAAYFRLELS).

It belongs to the UTP6 family. As to quaternary structure, component of the ribosomal small subunit (SSU) processome, composed of the 35S pre-rRNA precursor, the U3 snoRNA, and at least 40 protein subunits. Interacts with U3 snoRNA.

Its subcellular location is the nucleus. It localises to the nucleolus. In terms of biological role, component of the SSU processome, a pre-ribosomal particle required for the maturation of the 18S rRNA from the 35S pre-rRNA precursor. This Schizosaccharomyces pombe (strain 972 / ATCC 24843) (Fission yeast) protein is U3 small nucleolar RNA-associated protein 6 (utp6).